The chain runs to 262 residues: 3-dehydro-D-guloside 4-epimerase (262 aa).

Glutamate 146 (proton donor/acceptor) is an active-site residue. Mn(2+) is bound by residues glutamate 146 and aspartate 179. Histidine 182 lines the substrate pocket. Histidine 205 contributes to the Mn(2+) binding site. Arginine 211 provides a ligand contact to substrate. Catalysis depends on glutamate 240, which acts as the Proton donor/acceptor. Glutamate 240 is a binding site for Mn(2+).

It belongs to the hyi family. Requires Mn(2+) as cofactor.

The catalysed reaction is a 3-dehydro-D-guloside = a 3-dehydro-D-glucoside. In terms of biological role, catalyzes the epimerization at C4 of 3-dehydro-D-gulosides leading to 3-dehydro-D-glucosides. Probably functions in a metabolic pathway that transforms D-gulosides to D-glucosides. Can use methyl alpha-3-dehydro-D-glucoside and methyl beta-3-dehydro-D-glucoside as substrates in vitro. However, the actual specific physiological substrates for this metabolic pathway are unknown. Cannot act on D-psicose, D-fructose, D-tagatose, D-sorbose, L-xylulose, or L-ribulose. This Escherichia coli (strain K12) protein is 3-dehydro-D-guloside 4-epimerase (ycjR).